A 347-amino-acid polypeptide reads, in one-letter code: MKQTIILLYGGRSAEREVSVLSAESVMRAVNYDRFTVKTFFISQSGDFIKTQEFSQTPGQEDRLMTNETIDWDKKVAPSAIYEERAVVFPVLHGPMGEDGSVQGFLEVLKMPYVGCNILSSSLAMDKITTKRVLESAGIAQVPYVAIVEGDDVTAKIAEVEEELTYPVFTKPSNMGSSVGISKSENQEELRQALKLAFQYDSRVLVEQGVNAREIEVGLLGNYDVKSTLPGEVVKDVAFYDYDAKYIDNKITMDIPAKISDDVVAVMRQNAETAFRAIGGLGLSRCDFFYTDKGEIFLNELNTMPGFTQWSMYPLLWDNMGITYPDLIERLVELAKESFDKREAHLL.

In terms of domain architecture, ATP-grasp spans 131–333 (KRVLESAGIA…YPDLIERLVE (203 aa)). 161–216 (EEELTYPVFTKPSNMGSSVGISKSENQEELRQALKLAFQYDSRVLVEQGVNAREIE) is a binding site for ATP. Residues Asp287, Glu300, and Asn302 each coordinate Mg(2+).

This sequence belongs to the D-alanine--D-alanine ligase family. It depends on Mg(2+) as a cofactor. The cofactor is Mn(2+).

It localises to the cytoplasm. The catalysed reaction is 2 D-alanine + ATP = D-alanyl-D-alanine + ADP + phosphate + H(+). Its pathway is cell wall biogenesis; peptidoglycan biosynthesis. Its function is as follows. Cell wall formation. In Streptococcus pneumoniae (strain Hungary19A-6), this protein is D-alanine--D-alanine ligase.